Consider the following 1088-residue polypeptide: RNA-directed RNA polymerase (1088 aa).

Residues 501–687 form the RdRp catalytic domain; that stretch reads LSYGDVTRFL…AKRYIAGGKI (187 aa).

The protein belongs to the reoviridae RNA-directed RNA polymerase family. Interacts with VP3 (Potential). Interacts with VP2; this interaction activates VP1. Interacts with NSP5; this interaction is probably necessary for the formation of functional virus factories. Interacts with NSP2; this interaction is weak. Mg(2+) serves as cofactor.

The protein localises to the virion. It catalyses the reaction RNA(n) + a ribonucleoside 5'-triphosphate = RNA(n+1) + diphosphate. RNA-directed RNA polymerase that is involved in both transcription and genome replication. Together with VP3 capping enzyme, forms an enzyme complex positioned near the channels situated at each of the five-fold vertices of the core. Following infection, the outermost layer of the virus is lost, leaving a double-layered particle (DLP) made up of the core and VP6 shell. VP1 then catalyzes the transcription of fully conservative plus-strand genomic RNAs that are extruded through the DLP's channels into the cytoplasm where they function as mRNAs for translation of viral proteins. One copy of each of the viral (+)RNAs is also recruited during core assembly, together with newly synthesized polymerase complexes and VP2. The polymerase of these novo-formed particles catalyzes the synthesis of complementary minus-strands leading to dsRNA formation. To do so, the polymerase specifically recognizes and binds 4 bases 5'-UGUG-3' in the conserved 3'-sequence of plus-strand RNA templates. VP2 presumably activates the autoinhibited VP1-RNA complex to coordinate packaging and genome replication. Once dsRNA synthesis is complete, the polymerase switches to the transcriptional mode, thus providing secondary transcription. This chain is RNA-directed RNA polymerase, found in Bos taurus (Bovine).